We begin with the raw amino-acid sequence, 132 residues long: Small ribosomal subunit protein uS8 (132 aa).

Belongs to the universal ribosomal protein uS8 family. In terms of assembly, part of the 30S ribosomal subunit. Contacts proteins S5 and S12.

In terms of biological role, one of the primary rRNA binding proteins, it binds directly to 16S rRNA central domain where it helps coordinate assembly of the platform of the 30S subunit. This is Small ribosomal subunit protein uS8 from Streptomyces griseus subsp. griseus (strain JCM 4626 / CBS 651.72 / NBRC 13350 / KCC S-0626 / ISP 5235).